The chain runs to 544 residues: Prolyl 4-hydroxylase subunit alpha-3 (544 aa).

Residues 1–19 (MGPAARLAALLAVLAFRAG) form the signal peptide. Residues 107 to 131 (LEASENIRALKDGYERVEQDLPAFE) adopt a coiled-coil conformation. The TPR repeat unit spans residues 227–260 (EDALDHLAFAYFQAGNVLCALNLSREFLLYSPDN). An N-linked (GlcNAc...) asparagine glycan is attached at N248. Residues 422 to 529 (YAEYLQVVNY…KWVANKWIHE (108 aa)) enclose the Fe2OG dioxygenase domain. Residues H440 and D442 each coordinate Fe cation. The N-linked (GlcNAc...) asparagine glycan is linked to N482. A Fe cation-binding site is contributed by H510. K520 contributes to the 2-oxoglutarate binding site.

Belongs to the P4HA family. Heterotetramer of two alpha-3 chains and two beta chains (the beta chain is the multi-functional PDI). The cofactor is Fe(2+). L-ascorbate is required as a cofactor. N-glycosylation plays no role in the catalytic activity.

Its subcellular location is the endoplasmic reticulum lumen. It carries out the reaction L-prolyl-[collagen] + 2-oxoglutarate + O2 = trans-4-hydroxy-L-prolyl-[collagen] + succinate + CO2. Functionally, catalyzes the post-translational formation of 4-hydroxyproline in -Xaa-Pro-Gly- sequences in collagens and other proteins. The protein is Prolyl 4-hydroxylase subunit alpha-3 (P4HA3) of Bos taurus (Bovine).